The sequence spans 309 residues: L-lactate dehydrogenase 2 (309 aa).

Residues valine 16, aspartate 37, tyrosine 67, and 81 to 82 (GV) contribute to the NAD(+) site. Arginine 90 is a substrate binding site. Residue serine 103 participates in NAD(+) binding. 122–125 (NPVD) provides a ligand contact to substrate. Threonine 145 serves as a coordination point for NAD(+). 150-153 (DTAR) lines the substrate pocket. The Proton acceptor role is filled by histidine 177. Threonine 227 contacts substrate.

The protein belongs to the LDH/MDH superfamily. LDH family. In terms of assembly, homotetramer.

The protein localises to the cytoplasm. It carries out the reaction (S)-lactate + NAD(+) = pyruvate + NADH + H(+). The protein operates within fermentation; pyruvate fermentation to lactate; (S)-lactate from pyruvate: step 1/1. Catalyzes the conversion of lactate to pyruvate. The sequence is that of L-lactate dehydrogenase 2 from Lactiplantibacillus plantarum (strain ATCC BAA-793 / NCIMB 8826 / WCFS1) (Lactobacillus plantarum).